A 37-amino-acid chain; its full sequence is Large ribosomal subunit protein bL36c (37 aa).

It belongs to the bacterial ribosomal protein bL36 family.

The protein resides in the plastid. It is found in the chloroplast. In Cycas taitungensis (Prince sago), this protein is Large ribosomal subunit protein bL36c.